The primary structure comprises 121 residues: Basic phospholipase A2 (121 aa).

Cystine bridges form between Cys-26-Cys-114, Cys-28-Cys-44, Cys-43-Cys-94, Cys-49-Cys-121, Cys-50-Cys-87, Cys-57-Cys-80, and Cys-74-Cys-85. The Ca(2+) site is built by Tyr-27, Gly-29, and Gly-31. His-47 is an active-site residue. Residue Asp-48 coordinates Ca(2+). Residue Asp-88 is part of the active site.

Homopentamer. Ca(2+) serves as cofactor. Expressed by the venom gland.

The protein resides in the secreted. It catalyses the reaction a 1,2-diacyl-sn-glycero-3-phosphocholine + H2O = a 1-acyl-sn-glycero-3-phosphocholine + a fatty acid + H(+). In terms of biological role, snake venom phospholipase A2 (PLA2) that displays moderate myotoxic activity in vivo, and cytotoxic activity in vitro. In vitro, shows anticoagulant activity on human plasma and in mice causes inflammatory cell infiltration and myonecrosis in the gastrocnemius muscles of CD-1 mice 3 hours after injection (100 ug). PLA2 catalyzes the calcium-dependent hydrolysis of the 2-acyl groups in 3-sn-phosphoglycerides. This Porthidium ophryomegas (Slender hognose viper) protein is Basic phospholipase A2.